The sequence spans 375 residues: Succinyl-diaminopimelate desuccinylase (375 aa).

A Zn(2+)-binding site is contributed by histidine 66. Residue aspartate 68 is part of the active site. Zn(2+) is bound at residue aspartate 99. The active-site Proton acceptor is glutamate 133. Zn(2+) is bound by residues glutamate 134, glutamate 162, and histidine 348.

It belongs to the peptidase M20A family. DapE subfamily. As to quaternary structure, homodimer. The cofactor is Zn(2+). It depends on Co(2+) as a cofactor.

The catalysed reaction is N-succinyl-(2S,6S)-2,6-diaminopimelate + H2O = (2S,6S)-2,6-diaminopimelate + succinate. It functions in the pathway amino-acid biosynthesis; L-lysine biosynthesis via DAP pathway; LL-2,6-diaminopimelate from (S)-tetrahydrodipicolinate (succinylase route): step 3/3. Functionally, catalyzes the hydrolysis of N-succinyl-L,L-diaminopimelic acid (SDAP), forming succinate and LL-2,6-diaminopimelate (DAP), an intermediate involved in the bacterial biosynthesis of lysine and meso-diaminopimelic acid, an essential component of bacterial cell walls. The protein is Succinyl-diaminopimelate desuccinylase of Aeromonas salmonicida (strain A449).